The following is a 93-amino-acid chain: Protein FptB (93 aa).

The signal sequence occupies residues M1 to T25. Helical transmembrane passes span L44–L64 and F71–G91.

Its subcellular location is the cell membrane. Its function is as follows. May play some role in transport of Fe(3+)-pyochelin. The protein is Protein FptB (fptB) of Pseudomonas aeruginosa (strain ATCC 15692 / DSM 22644 / CIP 104116 / JCM 14847 / LMG 12228 / 1C / PRS 101 / PAO1).